Here is an 862-residue protein sequence, read N- to C-terminus: Genome polyprotein (862 aa).

A lipid anchor (N-myristoyl glycine; by host) is attached at Gly2.

The protein belongs to the picornaviruses polyprotein family. Interacts with capsid protein VP1 and capsid protein VP3 to form heterotrimeric protomers. As to quaternary structure, interacts with capsid protein VP0, and capsid protein VP3 to form heterotrimeric protomers. Five protomers subsequently associate to form pentamers which serve as building blocks for the capsid. Interacts with capsid protein VP2, capsid protein VP3 and capsid protein VP4 following cleavage of capsid protein VP0. In terms of assembly, interacts with capsid protein VP1 and capsid protein VP3 in the mature capsid. Interacts with capsid protein VP0 and capsid protein VP1 to form heterotrimeric protomers. Five protomers subsequently associate to form pentamers which serve as building blocks for the capsid. Interacts with capsid protein VP4 in the mature capsid. Interacts with protein 2C; this interaction may be important for virion morphogenesis. As to quaternary structure, interacts with capsid protein VP1 and capsid protein VP3. In terms of processing, specific enzymatic cleavages in vivo by the viral proteases yield processing intermediates and the mature proteins. Post-translationally, myristoylation is required for the formation of pentamers during virus assembly. Further assembly of 12 pentamers and a molecule of genomic RNA generates the provirion. During virion maturation, immature virions are rendered infectious following cleavage of VP0 into VP4 and VP2. This maturation seems to be an autocatalytic event triggered by the presence of RNA in the capsid and it is followed by a conformational change infectious virion. In terms of processing, myristoylation is required during RNA encapsidation and formation of the mature virus particle.

Its subcellular location is the virion. The protein resides in the host cytoplasm. In terms of biological role, forms an icosahedral capsid of pseudo T=3 symmetry with capsid proteins VP2 and VP3. The capsid is 300 Angstroms in diameter, composed of 60 copies of each capsid protein and enclosing the viral positive strand RNA genome. Capsid protein VP1 mainly forms the vertices of the capsid. Capsid protein VP1 interacts with host cell receptor to provide virion attachment to target host cells. This attachment induces virion internalization. Tyrosine kinases are probably involved in the entry process. After binding to its receptor, the capsid undergoes conformational changes. Capsid protein VP1 N-terminus (that contains an amphipathic alpha-helix) and capsid protein VP4 are externalized. Together, they shape a pore in the host membrane through which viral genome is translocated to host cell cytoplasm. Functionally, forms an icosahedral capsid of pseudo T=3 symmetry with capsid proteins VP2 and VP3. The capsid is 300 Angstroms in diameter, composed of 60 copies of each capsid protein and enclosing the viral positive strand RNA genome. Lies on the inner surface of the capsid shell. After binding to the host receptor, the capsid undergoes conformational changes. Capsid protein VP4 is released, Capsid protein VP1 N-terminus is externalized, and together, they shape a pore in the host membrane through which the viral genome is translocated into the host cell cytoplasm. Its function is as follows. Component of immature procapsids, which is cleaved into capsid proteins VP4 and VP2 after maturation. Allows the capsid to remain inactive before the maturation step. The protein is Genome polyprotein of Echovirus 16 (strain Harrington).